The following is a 336-amino-acid chain: uncharacterized protein (336 aa).

NADP(+) contacts are provided by lysine 39 and tyrosine 166.

It belongs to the NAD(P)-dependent epimerase/dehydratase family. Dihydroflavonol-4-reductase subfamily.

The protein localises to the cytoplasm. Its subcellular location is the nucleus. This is an uncharacterized protein from Schizosaccharomyces pombe (strain 972 / ATCC 24843) (Fission yeast).